The chain runs to 147 residues: MVSEAISKKEIERVKFESKDLHKPDEYWREHLTEEAFYVCRQQGTEAPYSGKLLHNKDTGLYHCTCCQSALFSSENKYDSGCGWPSFDAPINEQVIRFLDDFSHGMVRTEIRCAACDSHLGHVFEDGPKTTGLRFCVNSVSLIFNKK.

The MsrB domain occupies 25–147; the sequence is DEYWREHLTE…NSVSLIFNKK (123 aa). Zn(2+) is bound by residues C64, C67, C113, and C116. Residue C136 is the Nucleophile of the active site.

Belongs to the MsrB Met sulfoxide reductase family. The cofactor is Zn(2+).

The enzyme catalyses L-methionyl-[protein] + [thioredoxin]-disulfide + H2O = L-methionyl-(R)-S-oxide-[protein] + [thioredoxin]-dithiol. This is Peptide methionine sulfoxide reductase MsrB from Vibrio cholerae serotype O1 (strain ATCC 39541 / Classical Ogawa 395 / O395).